The following is a 394-amino-acid chain: Phosphoglycerate kinase (394 aa).

Substrate contacts are provided by residues 21 to 23 (DFN), Arg-37, 60 to 63 (HLGR), Arg-119, and Arg-152. ATP contacts are provided by residues Lys-202, Gly-293, Glu-324, and 350–353 (GGDS).

This sequence belongs to the phosphoglycerate kinase family. As to quaternary structure, monomer.

It localises to the cytoplasm. The catalysed reaction is (2R)-3-phosphoglycerate + ATP = (2R)-3-phospho-glyceroyl phosphate + ADP. Its pathway is carbohydrate degradation; glycolysis; pyruvate from D-glyceraldehyde 3-phosphate: step 2/5. The polypeptide is Phosphoglycerate kinase (Caldanaerobacter subterraneus subsp. tengcongensis (strain DSM 15242 / JCM 11007 / NBRC 100824 / MB4) (Thermoanaerobacter tengcongensis)).